We begin with the raw amino-acid sequence, 338 residues long: Oxygen-dependent coproporphyrinogen-III oxidase (338 aa).

Residue Ser104 coordinates substrate. The a divalent metal cation site is built by His108 and His118. His118 functions as the Proton donor in the catalytic mechanism. 120–122 (NYR) contacts substrate. 2 residues coordinate a divalent metal cation: His152 and His182. The segment at 274-309 (YVEFNLVYDRGTIFGLQTNGRTESILMSLPPLVRWE) is important for dimerization.

Belongs to the aerobic coproporphyrinogen-III oxidase family. Homodimer. It depends on a divalent metal cation as a cofactor.

It localises to the cytoplasm. It catalyses the reaction coproporphyrinogen III + O2 + 2 H(+) = protoporphyrinogen IX + 2 CO2 + 2 H2O. The protein operates within porphyrin-containing compound metabolism; protoporphyrin-IX biosynthesis; protoporphyrinogen-IX from coproporphyrinogen-III (O2 route): step 1/1. In terms of biological role, involved in the heme and chlorophyll biosynthesis. Catalyzes the aerobic oxidative decarboxylation of propionate groups of rings A and B of coproporphyrinogen-III to yield the vinyl groups in protoporphyrinogen-IX. The sequence is that of Oxygen-dependent coproporphyrinogen-III oxidase from Thermosynechococcus vestitus (strain NIES-2133 / IAM M-273 / BP-1).